The sequence spans 402 residues: Nicotinate phosphoribosyltransferase (402 aa).

Histidine 224 bears the Phosphohistidine; by autocatalysis mark.

It belongs to the NAPRTase family. In terms of processing, transiently phosphorylated on a His residue during the reaction cycle. Phosphorylation strongly increases the affinity for substrates and increases the rate of nicotinate D-ribonucleotide production. Dephosphorylation regenerates the low-affinity form of the enzyme, leading to product release.

It catalyses the reaction nicotinate + 5-phospho-alpha-D-ribose 1-diphosphate + ATP + H2O = nicotinate beta-D-ribonucleotide + ADP + phosphate + diphosphate. It participates in cofactor biosynthesis; NAD(+) biosynthesis; nicotinate D-ribonucleotide from nicotinate: step 1/1. Its function is as follows. Catalyzes the synthesis of beta-nicotinate D-ribonucleotide from nicotinate and 5-phospho-D-ribose 1-phosphate at the expense of ATP. This chain is Nicotinate phosphoribosyltransferase, found in Neisseria meningitidis serogroup B (strain ATCC BAA-335 / MC58).